Here is a 140-residue protein sequence, read N- to C-terminus: Ribonuclease P protein component (140 aa).

Belongs to the RnpA family. In terms of assembly, consists of a catalytic RNA component (M1 or rnpB) and a protein subunit.

The catalysed reaction is Endonucleolytic cleavage of RNA, removing 5'-extranucleotides from tRNA precursor.. In terms of biological role, RNaseP catalyzes the removal of the 5'-leader sequence from pre-tRNA to produce the mature 5'-terminus. It can also cleave other RNA substrates such as 4.5S RNA. The protein component plays an auxiliary but essential role in vivo by binding to the 5'-leader sequence and broadening the substrate specificity of the ribozyme. This is Ribonuclease P protein component from Nostoc sp. (strain PCC 7120 / SAG 25.82 / UTEX 2576).